The following is a 346-amino-acid chain: Tetraacyldisaccharide 4'-kinase (346 aa).

An ATP-binding site is contributed by 62-69; the sequence is TAGGTGKT.

It belongs to the LpxK family.

The catalysed reaction is a lipid A disaccharide + ATP = a lipid IVA + ADP + H(+). The protein operates within glycolipid biosynthesis; lipid IV(A) biosynthesis; lipid IV(A) from (3R)-3-hydroxytetradecanoyl-[acyl-carrier-protein] and UDP-N-acetyl-alpha-D-glucosamine: step 6/6. Transfers the gamma-phosphate of ATP to the 4'-position of a tetraacyldisaccharide 1-phosphate intermediate (termed DS-1-P) to form tetraacyldisaccharide 1,4'-bis-phosphate (lipid IVA). This chain is Tetraacyldisaccharide 4'-kinase, found in Xanthomonas oryzae pv. oryzae (strain MAFF 311018).